Consider the following 443-residue polypeptide: Serine--tRNA ligase (443 aa).

246-248 (TAE) contacts L-serine. Position 277–279 (277–279 (RAE)) interacts with ATP. L-serine is bound at residue Glu-300. An ATP-binding site is contributed by 367–370 (EISS). Ser-402 is an L-serine binding site.

It belongs to the class-II aminoacyl-tRNA synthetase family. Type-1 seryl-tRNA synthetase subfamily. In terms of assembly, homodimer. The tRNA molecule binds across the dimer.

The protein resides in the cytoplasm. The enzyme catalyses tRNA(Ser) + L-serine + ATP = L-seryl-tRNA(Ser) + AMP + diphosphate + H(+). It carries out the reaction tRNA(Sec) + L-serine + ATP = L-seryl-tRNA(Sec) + AMP + diphosphate + H(+). It functions in the pathway aminoacyl-tRNA biosynthesis; selenocysteinyl-tRNA(Sec) biosynthesis; L-seryl-tRNA(Sec) from L-serine and tRNA(Sec): step 1/1. Its function is as follows. Catalyzes the attachment of serine to tRNA(Ser). Is also able to aminoacylate tRNA(Sec) with serine, to form the misacylated tRNA L-seryl-tRNA(Sec), which will be further converted into selenocysteinyl-tRNA(Sec). This is Serine--tRNA ligase from Bradyrhizobium diazoefficiens (strain JCM 10833 / BCRC 13528 / IAM 13628 / NBRC 14792 / USDA 110).